Reading from the N-terminus, the 48-residue chain is Large ribosomal subunit protein bL34 (48 aa).

This sequence belongs to the bacterial ribosomal protein bL34 family.

The chain is Large ribosomal subunit protein bL34 (rpmH) from Mycoplasma genitalium (strain ATCC 33530 / DSM 19775 / NCTC 10195 / G37) (Mycoplasmoides genitalium).